Reading from the N-terminus, the 176-residue chain is ATP-dependent protease subunit HslV (176 aa).

Thr2 is an active-site residue. Na(+) is bound by residues Gly157, Cys160, and Thr163.

It belongs to the peptidase T1B family. HslV subfamily. A double ring-shaped homohexamer of HslV is capped on each side by a ring-shaped HslU homohexamer. The assembly of the HslU/HslV complex is dependent on binding of ATP.

Its subcellular location is the cytoplasm. The catalysed reaction is ATP-dependent cleavage of peptide bonds with broad specificity.. Allosterically activated by HslU binding. Protease subunit of a proteasome-like degradation complex believed to be a general protein degrading machinery. The chain is ATP-dependent protease subunit HslV from Pseudomonas entomophila (strain L48).